The sequence spans 185 residues: Kappa-casein (185 aa).

The N-terminal stretch at 1–20 (MKSFFLVVNILALTLPFLGA) is a signal peptide. O-linked (GalNAc...) threonine glycosylation is present at threonine 143. Serine 161 carries the phosphoserine; alternate modification. O-linked (GalNAc...) serine; alternate glycosylation is present at serine 161. Residue threonine 178 is glycosylated (O-linked (GalNAc...) threonine). Phosphoserine is present on serine 179.

It belongs to the kappa-casein family. As to expression, mammary gland specific. Secreted in milk.

The protein resides in the secreted. Its function is as follows. Kappa-casein stabilizes micelle formation, preventing casein precipitation in milk. The protein is Kappa-casein (CSN3) of Equus caballus (Horse).